The following is a 379-amino-acid chain: Ribosomal RNA small subunit methyltransferase H (379 aa).

S-adenosyl-L-methionine-binding positions include 71 to 73 (GGH), glutamate 90, aspartate 157, and histidine 164.

This sequence belongs to the methyltransferase superfamily. RsmH family.

It is found in the cytoplasm. It catalyses the reaction cytidine(1402) in 16S rRNA + S-adenosyl-L-methionine = N(4)-methylcytidine(1402) in 16S rRNA + S-adenosyl-L-homocysteine + H(+). Its function is as follows. Specifically methylates the N4 position of cytidine in position 1402 (C1402) of 16S rRNA. The chain is Ribosomal RNA small subunit methyltransferase H from Treponema pallidum (strain Nichols).